An 861-amino-acid chain; its full sequence is Nuclear pore complex protein NUP93A (861 aa).

It belongs to the nucleoporin interacting component (NIC) family. As to quaternary structure, part of the nuclear pore complex (NPC). The NPC has an eight-fold symmetrical structure comprising a central transport channel and two rings, the cytoplasmic and nuclear rings, to which eight filaments are attached. The cytoplasmic filaments have loose ends, while the nuclear filaments are joined in a distal ring, forming a nuclear basket. NPCs are highly dynamic in configuration and composition, and can be devided in 3 subcomplexes, the NUP62 subcomplex, the NUP107-160 subcomplex and the NUP93 subcomplex, containing approximately 30 different nucleoporin proteins.

The protein localises to the nucleus envelope. It localises to the nucleus. Its subcellular location is the nuclear pore complex. The sequence is that of Nuclear pore complex protein NUP93A from Arabidopsis thaliana (Mouse-ear cress).